Consider the following 595-residue polypeptide: Actin-histidine N-methyltransferase (595 aa).

The segment at Met-1–Pro-22 is disordered. A compositionally biased stretch (polar residues) spans Gln-10–Val-20. Residues Arg-75, Glu-104–Phe-106, Arg-254, Asp-275–His-279, and Ser-325–Phe-327 contribute to the S-adenosyl-L-methionine site. In terms of domain architecture, SET spans Glu-94–Gly-314. Position 513 is a phosphoserine (Ser-513). Over residues Glu-549–Gln-572 the composition is skewed to polar residues. The segment at Glu-549 to Glu-595 is disordered. The segment covering Glu-573 to Lys-583 has biased composition (basic and acidic residues). The span at Gly-584 to Glu-595 shows a compositional bias: polar residues.

Belongs to the class V-like SAM-binding methyltransferase superfamily. SETD3 actin-histidine methyltransferase family. Interacts with MYOD1. Phosphorylated by GSK3B, which is required for recognition by the SCF(FBXW7) complex and subsequent degradation. In terms of processing, ubiquitinated by the SCF(FBXW7) complex following phosphorylation by GSK3B, leading to its degradation by the proteasome.

The protein localises to the cytoplasm. It is found in the nucleus. The catalysed reaction is L-histidyl-[protein] + S-adenosyl-L-methionine = N(tele)-methyl-L-histidyl-[protein] + S-adenosyl-L-homocysteine + H(+). In terms of biological role, protein-histidine N-methyltransferase that specifically mediates 3-methylhistidine (tele-methylhistidine) methylation of actin at 'His-73'. Histidine methylation of actin is required for smooth muscle contraction of the laboring uterus during delivery. Does not have protein-lysine N-methyltransferase activity and probably only catalyzes histidine methylation of actin. The chain is Actin-histidine N-methyltransferase from Papio anubis (Olive baboon).